Reading from the N-terminus, the 473-residue chain is Photosystem II CP43 reaction center protein (473 aa).

Positions 1 to 14 (MKILYSPRRFYPVE) are excised as a propeptide. Position 15 is an N-acetylthreonine (Thr15). Thr15 is subject to Phosphothreonine. Helical transmembrane passes span 69 to 93 (LFEV…PHLA), 134 to 155 (IIGP…KDKN), 178 to 200 (KALY…RKIT), 255 to 275 (KPFA…LSYS), and 291 to 312 (WFNN…ASQA). [CaMn4O5] cluster is bound at residue Glu367. The chain crosses the membrane as a helical span at residues 447 to 471 (RARAAAAGFEKGIDRDFEPVLSTTP).

Belongs to the PsbB/PsbC family. PsbC subfamily. In terms of assembly, PSII is composed of 1 copy each of membrane proteins PsbA, PsbB, PsbC, PsbD, PsbE, PsbF, PsbH, PsbI, PsbJ, PsbK, PsbL, PsbM, PsbT, PsbX, PsbY, PsbZ, Psb30/Ycf12, at least 3 peripheral proteins of the oxygen-evolving complex and a large number of cofactors. It forms dimeric complexes. Requires Binds multiple chlorophylls and provides some of the ligands for the Ca-4Mn-5O cluster of the oxygen-evolving complex. It may also provide a ligand for a Cl- that is required for oxygen evolution. PSII binds additional chlorophylls, carotenoids and specific lipids. as cofactor.

The protein localises to the plastid. It localises to the chloroplast thylakoid membrane. One of the components of the core complex of photosystem II (PSII). It binds chlorophyll and helps catalyze the primary light-induced photochemical processes of PSII. PSII is a light-driven water:plastoquinone oxidoreductase, using light energy to abstract electrons from H(2)O, generating O(2) and a proton gradient subsequently used for ATP formation. This is Photosystem II CP43 reaction center protein from Huperzia lucidula (Shining clubmoss).